The sequence spans 60 residues: Protein AC4 (60 aa).

The protein belongs to the geminiviridae protein AC4/C4 family.

Pathogenicity determinant. May act as a suppressor of RNA-mediated gene silencing, also known as post-transcriptional gene silencing (PTGS), a mechanism of plant viral defense that limits the accumulation of viral RNAs. The sequence is that of Protein AC4 from Pepper huasteco yellow vein virus (PHYVV).